A 314-amino-acid polypeptide reads, in one-letter code: DegV domain-containing protein XCC3382 (314 aa).

Positions 3–307 (IGIVVDSACD…KGALAVAFAA (305 aa)) constitute a DegV domain. Residues threonine 63 and serine 96 each contribute to the hexadecanoate site.

Its function is as follows. May bind long-chain fatty acids, such as palmitate, and may play a role in lipid transport or fatty acid metabolism. This chain is DegV domain-containing protein XCC3382, found in Xanthomonas campestris pv. campestris (strain ATCC 33913 / DSM 3586 / NCPPB 528 / LMG 568 / P 25).